The following is a 323-amino-acid chain: Aldo-keto reductase family 1 member C4 (323 aa).

NADP(+) contacts are provided by residues 20–24 (GFGSY) and Asp-50. Tyr-55 functions as the Proton donor in the catalytic mechanism. Substrate is bound at residue His-117. NADP(+)-binding positions include 166 to 167 (SN), Gln-190, 216 to 221 (HSALGT), and 270 to 280 (KSYNEQRIREN).

The protein belongs to the aldo/keto reductase family. As to quaternary structure, monomer. As to expression, high expression in liver. Also expressed in kidney.

Its subcellular location is the cytoplasm. The protein resides in the cytosol. It carries out the reaction chlordecone alcohol + NADP(+) = chlordecone + NADPH + H(+). The catalysed reaction is a 3alpha-hydroxysteroid + NADP(+) = a 3-oxosteroid + NADPH + H(+). The enzyme catalyses a 3alpha-hydroxysteroid + NAD(+) = a 3-oxosteroid + NADH + H(+). It catalyses the reaction 5alpha-androstane-3alpha,17beta-diol + NADP(+) = 17beta-hydroxy-5alpha-androstan-3-one + NADPH + H(+). It carries out the reaction 5alpha-androstane-3beta,17beta-diol + NADP(+) = 17beta-hydroxy-5alpha-androstan-3-one + NADPH + H(+). The catalysed reaction is 5alpha-androstane-3alpha,17beta-diol + NAD(+) = 17beta-hydroxy-5alpha-androstan-3-one + NADH + H(+). The enzyme catalyses 17beta-estradiol + NADP(+) = estrone + NADPH + H(+). It catalyses the reaction 17beta-estradiol + NAD(+) = estrone + NADH + H(+). It carries out the reaction (20S)-hydroxypregn-4-en-3-one + NADP(+) = progesterone + NADPH + H(+). The catalysed reaction is (20S)-hydroxypregn-4-en-3-one + NAD(+) = progesterone + NADH + H(+). The enzyme catalyses androsterone + NADP(+) = 5alpha-androstan-3,17-dione + NADPH + H(+). It catalyses the reaction testosterone + NADP(+) = androst-4-ene-3,17-dione + NADPH + H(+). It carries out the reaction testosterone + NAD(+) = androst-4-ene-3,17-dione + NADH + H(+). The catalysed reaction is 3alpha-hydroxy-5alpha-androstane 17-O-(beta-D-glucuronate) + NADP(+) = 5alpha-dihydrotestosterone 17-O-(beta-D-glucuronate) + NADPH + H(+). The enzyme catalyses (3beta,5alpha,17beta)-3-hydroxy-androstan-17-yl sulfate + NADP(+) = 5alpha-dihydrotestosterone sulfate + NADPH + H(+). It catalyses the reaction 5alpha-androstane-3alpha,17beta-diol + NAD(+) = androsterone + NADH + H(+). The protein operates within steroid metabolism. With respect to regulation, potently inhibited by benzbromarone, 3',3'',5',5''-tetrabromophenolphthalein (TBPP) and o-cresolphthalein. Its function is as follows. Cytosolic aldo-keto reductase that catalyzes the NADH and NADPH-dependent reduction of ketosteroids to hydroxysteroids. Liver specific enzyme that acts as an NAD(P)(H)-dependent 3-, 17- and 20-ketosteroid reductase on the steroid nucleus and side chain. Displays the ability to catalyze both oxidation and reduction in vitro, but most probably acts as a reductase in vivo since the oxidase activity measured in vitro is inhibited by physiological concentration of NADPH. Acts preferentially as a 3-alpha-hydroxysteroid dehydrogenase (HSD) with a subsidiary 3-beta-HSD activity. Catalyzes efficiently the transformation of the potent androgen 5-alpha-dihydrotestosterone (5alpha-DHT or 17beta-hydroxy-5alpha-androstan-3-one) into the less active form, 5-alpha-androstan-3-alpha,17-beta-diol (3-alpha-diol). Catalyzes the reduction of estrone into 17beta-estradiol but with low efficiency. Metabolizes a broad spectrum of natural and synthetic therapeutic steroid and plays an important role in metabolism of androgens, estrogens, progestereone and conjugated steroids. Catalyzes the biotransformation of the pesticide chlordecone (kepone) to its corresponding alcohol leading to increased biliary excretion of the pesticide and concomitant reduction of its neurotoxicity since bile is the major excretory route. This Macaca fuscata fuscata (Japanese macaque) protein is Aldo-keto reductase family 1 member C4 (AKR1C4).